We begin with the raw amino-acid sequence, 336 residues long: Foldase protein PrsA (336 aa).

An N-terminal signal peptide occupies residues 1 to 22 (MKSAKKLLSVLCLGIFILTFTA). The N-palmitoyl cysteine moiety is linked to residue cysteine 23. Residue cysteine 23 is the site of S-diacylglycerol cysteine attachment. The PpiC domain occupies 194–286 (PNTMNVSHIL…WGYHIIKVNS (93 aa)).

This sequence belongs to the PrsA family.

Its subcellular location is the cell membrane. The catalysed reaction is [protein]-peptidylproline (omega=180) = [protein]-peptidylproline (omega=0). In terms of biological role, plays a major role in protein secretion by helping the post-translocational extracellular folding of several secreted proteins. This is Foldase protein PrsA from Clostridium botulinum (strain ATCC 19397 / Type A).